A 483-amino-acid chain; its full sequence is Serine protease HTRA4 (483 aa).

The signal sequence occupies residues 1-30; it reads MSFQRLWAVRTQFLLLWLLLPAVPVPWAEA. An IGFBP N-terminal domain is found at 35–113; that stretch reads VSLPCPDACD…GAWLGTCGCA (79 aa). Disulfide bonds link Cys39–Cys65, Cys43–Cys67, Cys48–Cys68, Cys54–Cys71, Cys79–Cys93, and Cys87–Cys110. Residues 208 to 368 are serine protease; that stretch reads GSGFIVSEDG…IPSDRIRQFL (161 aa). Catalysis depends on charge relay system residues His224, Asp254, and Ser332. In terms of domain architecture, PDZ spans 379–471; that stretch reads KAPLQKKYLG…LSIIVLRGSQ (93 aa).

The protein belongs to the peptidase S1C family.

The protein localises to the secreted. Serine protease. The protein is Serine protease HTRA4 (Htra4) of Mus musculus (Mouse).